We begin with the raw amino-acid sequence, 1479 residues long: Chromosome partition protein MukB (1479 aa).

34 to 41 (GGNGAGKS) contacts ATP. Coiled-coil stretches lie at residues 337–418 (LNLV…QYQQ), 511–603 (QAER…RAPV), 780–810 (RAAREMRLESLRDEREALAEQYATLSFDVQK), 847–1116 (ELDR…AKAG), and 1206–1265 (DDPV…LQAV). The flexible hinge stretch occupies residues 666–783 (PGGSEDPRLN…EVPLFGRAAR (118 aa)).

It belongs to the SMC family. MukB subfamily. Homodimerization via its hinge domain. Binds to DNA via its C-terminal region. Interacts, and probably forms a ternary complex, with MukE and MukF via its C-terminal region. The complex formation is stimulated by calcium or magnesium. Interacts with tubulin-related protein FtsZ.

Its subcellular location is the cytoplasm. It is found in the nucleoid. Plays a central role in chromosome condensation, segregation and cell cycle progression. Functions as a homodimer, which is essential for chromosome partition. Involved in negative DNA supercoiling in vivo, and by this means organize and compact chromosomes. May achieve or facilitate chromosome segregation by condensation DNA from both sides of a centrally located replisome during cell division. This is Chromosome partition protein MukB from Pectobacterium carotovorum subsp. carotovorum (strain PC1).